Reading from the N-terminus, the 518-residue chain is Bifunctional purine biosynthesis protein PurH (518 aa).

Residues 1–146 form the MGS-like domain; the sequence is MGRMALLSTS…KNHAHVTVLV (146 aa).

Belongs to the PurH family.

The enzyme catalyses (6R)-10-formyltetrahydrofolate + 5-amino-1-(5-phospho-beta-D-ribosyl)imidazole-4-carboxamide = 5-formamido-1-(5-phospho-D-ribosyl)imidazole-4-carboxamide + (6S)-5,6,7,8-tetrahydrofolate. It catalyses the reaction IMP + H2O = 5-formamido-1-(5-phospho-D-ribosyl)imidazole-4-carboxamide. It functions in the pathway purine metabolism; IMP biosynthesis via de novo pathway; 5-formamido-1-(5-phospho-D-ribosyl)imidazole-4-carboxamide from 5-amino-1-(5-phospho-D-ribosyl)imidazole-4-carboxamide (10-formyl THF route): step 1/1. It participates in purine metabolism; IMP biosynthesis via de novo pathway; IMP from 5-formamido-1-(5-phospho-D-ribosyl)imidazole-4-carboxamide: step 1/1. In Thermosynechococcus vestitus (strain NIES-2133 / IAM M-273 / BP-1), this protein is Bifunctional purine biosynthesis protein PurH.